The sequence spans 498 residues: Glycylpeptide N-tetradecanoyltransferase 2 (498 aa).

A disordered region spans residues 1–88; that stretch reads MAEDSESAAS…QPSKNPSVPM (88 aa). Positions 15-32 are enriched in acidic residues; that stretch reads ELDDQDTCGIDGDNEEET. Phosphoserine is present on S38. Basic residues predominate over residues 45-57; sequence AKKKKKKQKRKKE. Residues 61–86 are compositionally biased toward polar residues; sequence SGGTKSDSASDSQEIKIQQPSKNPSV. Tetradecanoyl-CoA-binding residues include H117, W122, L250, V252, S258, R260, V261, and A262.

Belongs to the NMT family.

The protein resides in the cytoplasm. Its subcellular location is the membrane. It catalyses the reaction N-terminal glycyl-[protein] + tetradecanoyl-CoA = N-tetradecanoylglycyl-[protein] + CoA + H(+). The enzyme catalyses N-terminal glycyl-L-lysyl-[protein] + tetradecanoyl-CoA = N-terminal glycyl-(N(6)-tetradecanoyl)-L-lysyl-[protein] + CoA + H(+). In terms of biological role, adds a myristoyl group to the N-terminal glycine residue of certain cellular and viral proteins. Also able to mediate N-terminal lysine myristoylation of proteins: catalyzes myristoylation of ARF6 on both 'Gly-2' and 'Lys-3'. Lysine myristoylation is required to maintain ARF6 on membranes during the GTPase cycle. This chain is Glycylpeptide N-tetradecanoyltransferase 2, found in Homo sapiens (Human).